The primary structure comprises 381 residues: Meiotic recombination protein SPO11-1 (381 aa).

The region spanning 23–162 is the Topo IIA-type catalytic domain; that stretch reads EEAATLLHRI…LNVVPVAKGL (140 aa). Tyrosine 123 serves as the catalytic O-(5'-phospho-DNA)-tyrosine intermediate. Residues glutamate 209 and aspartate 261 each coordinate Mg(2+).

It belongs to the TOP6A family. Mg(2+) is required as a cofactor. As to expression, highly expressed in flowers before pollination. Expressed in roots and shoots.

Its subcellular location is the nucleus. It catalyses the reaction ATP-dependent breakage, passage and rejoining of double-stranded DNA.. Its function is as follows. Required for meiotic recombination. Mediates DNA cleavage that forms the double-strand breaks (DSB) that initiate meiotic recombination. May be involved in plant growth and development, and stress tolerance. In Oryza sativa subsp. indica (Rice), this protein is Meiotic recombination protein SPO11-1 (SPO11-1).